Reading from the N-terminus, the 487-residue chain is N-succinylglutamate 5-semialdehyde dehydrogenase (487 aa).

Position 221–226 (221–226 (GSSRTG)) interacts with NAD(+). Residues E244 and C278 contribute to the active site.

Belongs to the aldehyde dehydrogenase family. AstD subfamily.

The enzyme catalyses N-succinyl-L-glutamate 5-semialdehyde + NAD(+) + H2O = N-succinyl-L-glutamate + NADH + 2 H(+). Its pathway is amino-acid degradation; L-arginine degradation via AST pathway; L-glutamate and succinate from L-arginine: step 4/5. Catalyzes the NAD-dependent reduction of succinylglutamate semialdehyde into succinylglutamate. The polypeptide is N-succinylglutamate 5-semialdehyde dehydrogenase (Pseudomonas putida (strain ATCC 700007 / DSM 6899 / JCM 31910 / BCRC 17059 / LMG 24140 / F1)).